The primary structure comprises 248 residues: Methionine aminopeptidase 1 (248 aa).

H77 is a binding site for substrate. D94, D105, and H168 together coordinate a divalent metal cation. A substrate-binding site is contributed by H175. A divalent metal cation is bound by residues E201 and E232.

In terms of assembly, monomer. It depends on Co(2+) as a cofactor. The cofactor is Zn(2+). Requires Mn(2+) as cofactor. Fe(2+) is required as a cofactor.

Its subcellular location is the cytoplasm. It carries out the reaction Release of N-terminal amino acids, preferentially methionine, from peptides and arylamides.. Functionally, removes the N-terminal methionine from nascent proteins. The N-terminal methionine is often cleaved when the second residue in the primary sequence is small and uncharged (Met-Ala-, Cys, Gly, Pro, Ser, Thr, or Val). Requires deformylation of the N(alpha)-formylated initiator methionine before it can be hydrolyzed. In Bacillus subtilis (strain 168), this protein is Methionine aminopeptidase 1.